Here is a 147-residue protein sequence, read N- to C-terminus: Small ribosomal subunit protein uS9 (147 aa).

The protein belongs to the universal ribosomal protein uS9 family.

In Dictyostelium discoideum (Social amoeba), this protein is Small ribosomal subunit protein uS9 (rps16).